A 230-amino-acid polypeptide reads, in one-letter code: GTP cyclohydrolase III (230 aa).

This sequence belongs to the archaeal-type GTP cyclohydrolase family.

It carries out the reaction GTP + 3 H2O = 2-amino-5-formylamino-6-(5-phospho-D-ribosylamino)pyrimidin-4(3H)-one + 2 phosphate + 2 H(+). Functionally, catalyzes the formation of 2-amino-5-formylamino-6-ribofuranosylamino-4(3H)-pyrimidinone ribonucleotide monophosphate and inorganic phosphate from GTP. Also has an independent pyrophosphate phosphohydrolase activity. The sequence is that of GTP cyclohydrolase III from Saccharolobus islandicus (strain M.14.25 / Kamchatka #1) (Sulfolobus islandicus).